We begin with the raw amino-acid sequence, 156 residues long: MALEKSLVLLPLLVLALLVLGWIQPSLGKESRAMKFQRQHMDPGSSSSSSSTYCNQMMRRRNMTNGWCKPVNTFVHEPLVDVQAICFQENVTCKNGQTNCYKSNSTMHITDCRLTGSSKYPNCAYRTSQKERRIIVACEGSPYVPVHFDASVEDST.

The signal sequence occupies residues 1–28 (MALEKSLVLLPLLVLALLVLGWIQPSLG). Substrate contacts are provided by lysine 35 and arginine 38. The active-site Proton acceptor is the histidine 40. 4 disulfides stabilise this stretch: cysteine 54-cysteine 112, cysteine 68-cysteine 123, cysteine 86-cysteine 138, and cysteine 93-cysteine 100. N-linked (GlcNAc...) asparagine glycosylation is present at asparagine 62. 69 to 73 (KPVNT) serves as a coordination point for substrate. Asparagine 90 carries N-linked (GlcNAc...) asparagine glycosylation. Position 94 (lysine 94) interacts with substrate. An N-linked (GlcNAc...) asparagine glycan is attached at asparagine 104. Arginine 113 is a substrate binding site. The Proton donor role is filled by histidine 147.

Belongs to the pancreatic ribonuclease family. Monomer. Interacts with and forms tight 1:1 complexes with RNH1. Dimerization of two such complexes may occur. Interaction with RNH1 inhibits this protein.

It is found in the secreted. The enzyme catalyses an [RNA] containing cytidine + H2O = an [RNA]-3'-cytidine-3'-phosphate + a 5'-hydroxy-ribonucleotide-3'-[RNA].. It catalyses the reaction an [RNA] containing uridine + H2O = an [RNA]-3'-uridine-3'-phosphate + a 5'-hydroxy-ribonucleotide-3'-[RNA].. Functionally, endonuclease that catalyzes the cleavage of RNA on the 3' side of pyrimidine nucleotides. Acts on single-stranded and double-stranded RNA. The sequence is that of Ribonuclease pancreatic (RNASE1) from Lemur catta (Ring-tailed lemur).